The chain runs to 325 residues: 6-phosphogluconolactonase 3, chloroplastic (325 aa).

The transit peptide at 1-68 directs the protein to the chloroplast; sequence MASSSCFLRS…KSSDTRRKVK (68 aa). The tract at residues 51 to 73 is disordered; it reads SIGTGSTKKSSDTRRKVKSMATT. Residues 323 to 325 carry the Microbody targeting signal motif; the sequence is SKL.

The protein belongs to the glucosamine/galactosamine-6-phosphate isomerase family. 6-phosphogluconolactonase subfamily. In terms of assembly, interacts with TRXM2. As to expression, expressed in roots, leaves and shoots.

It is found in the plastid. The protein resides in the chloroplast. Its subcellular location is the peroxisome. The catalysed reaction is 6-phospho-D-glucono-1,5-lactone + H2O = 6-phospho-D-gluconate + H(+). It functions in the pathway carbohydrate degradation; pentose phosphate pathway; D-ribulose 5-phosphate from D-glucose 6-phosphate (oxidative stage): step 2/3. Its function is as follows. Catalyzes the hydrolysis of 6-phosphogluconolactone to 6-phosphogluconate. Involved in the regulation of cellular redox state; enzymatic activity is required for this function. Required for sugar-dependent expression of nitrate assimilation genes in the nucleus of root cells. In Arabidopsis thaliana (Mouse-ear cress), this protein is 6-phosphogluconolactonase 3, chloroplastic.